The primary structure comprises 776 residues: Systemic RNA interference defective protein 1 (776 aa).

Residues 1-17 form the signal peptide; the sequence is MIRVYLIILMHLVIGLT. The Extracellular portion of the chain corresponds to 18 to 319; that stretch reads QNNSTTPSPI…ENQSYAVPTA (302 aa). N-linked (GlcNAc...) asparagine glycosylation is found at Asn-19, Asn-20, Asn-32, Asn-205, Asn-210, Asn-234, Asn-290, and Asn-311. An involved in dsRNA-binding region spans residues 22–312; sequence TTPSPIITSS…SFEFKKLENQ (291 aa). The chain crosses the membrane as a helical span at residues 320–340; the sequence is LMMIFLTTPCLLFLPIVINII. Over 341 to 429 the chain is Cytoplasmic; sequence KNSRKLAPSQ…KQDSLSLHGQ (89 aa). Positions 360–390 are disordered; that stretch reads PSEQRDMDLSHDEQQNTSSELENNGEIPAAE. Residues 362-373 show a composition bias toward basic and acidic residues; it reads EQRDMDLSHDEQ. The helical transmembrane segment at 430-450 threads the bilayer; that stretch reads MLQYPVAIILPVLMHTAIEFH. Topologically, residues 451 to 481 are extracellular; that stretch reads KWTTSTMANRDEMCFHNHACARPLGELRAWN. Residues 482 to 502 traverse the membrane as a helical segment; that stretch reads NIITNIGYTLYGAIFIVLSIC. Residues 503–510 lie on the Cytoplasmic side of the membrane; that stretch reads RRGRHEYS. The chain crosses the membrane as a helical span at residues 511–531; that stretch reads HVFGTYECTLLDVTIGVFMVL. The Extracellular portion of the chain corresponds to 532–543; the sequence is QSIASATYHICP. The chain crosses the membrane as a helical span at residues 544–564; that stretch reads SDVAFQFDTPCIQVICGLLMV. The Cytoplasmic segment spans residues 565-575; that stretch reads RQWFVRHESPS. Residues 576-596 traverse the membrane as a helical segment; the sequence is PAYTNILLVGVVSLNFLISAF. Over 597 to 599 the chain is Extracellular; the sequence is SKT. A helical membrane pass occupies residues 600–620; it reads SYVRFIIAVIHVIVVGSICLA. Over 621 to 633 the chain is Cytoplasmic; that stretch reads KERSLGSEKLKTR. Residues 634–654 traverse the membrane as a helical segment; that stretch reads FFIMAFSMGNFAAIVMYLTLS. Topologically, residues 655–659 are extracellular; the sequence is AFHLN. The chain crosses the membrane as a helical span at residues 660–680; the sequence is QIATYCFIINCIMYLMYYGCM. The Cytoplasmic portion of the chain corresponds to 681 to 691; it reads KVLHSERITSK. A helical membrane pass occupies residues 692–712; that stretch reads AKLCGALSLLAWAVAGFFFFQ. Residues 713-741 are Extracellular-facing; it reads DDTDWTRSAAASRALNKPCLLLGFFGSHD. Residues 742-762 traverse the membrane as a helical segment; the sequence is LWHIFGALAGLFTFIFVSFVD. Topologically, residues 763-776 are cytoplasmic; it reads DDLINTRKTSINIF.

It belongs to the SID1 family. May self-associate to form multimers. As to expression, expressed in most non-neuronal cells, including body wall muscle cells.

It localises to the cell membrane. Functionally, plays a role in RNA-mediated gene silencing by acting cell-autonomously as a channel for the transport of double-stranded RNA (dsRNA) between cells. Mediates the spread of dsRNA and subsequent silencing of genes in cells distant from the site of dsRNA introduction. Selective for dsRNA. Preferentially binds long dsRNA, from 50 base pairs up to 700. Short 20 base-pair long molecules are not bound. May also bind dsDNA, but with lower affinity. Binding may be sequence-independent. Required for avoidance behavior induced by small RNAs derived from pathogenic bacteria such as P.aeruginosa. The sequence is that of Systemic RNA interference defective protein 1 from Caenorhabditis elegans.